The chain runs to 70 residues: Large ribosomal subunit protein eL38 (70 aa).

This sequence belongs to the eukaryotic ribosomal protein eL38 family.

The chain is Large ribosomal subunit protein eL38 (RpL38) from Spodoptera frugiperda (Fall armyworm).